We begin with the raw amino-acid sequence, 120 residues long: Photosystem II extrinsic protein U (120 aa).

Residues 1–29 form the signal peptide; it reads MKRLLSLLTGVLVMTGLLMALIFPQSAYA.

The protein belongs to the PsbU family. In terms of assembly, PSII is composed of 1 copy each of membrane proteins PsbA, PsbB, PsbC, PsbD, PsbE, PsbF, PsbH, PsbI, PsbJ, PsbK, PsbL, PsbM, PsbT, PsbX, PsbY, Psb30/Ycf12, peripheral proteins PsbO, CyanoQ (PsbQ), PsbU, PsbV and a large number of cofactors. It forms dimeric complexes.

Its subcellular location is the cellular thylakoid membrane. In terms of biological role, one of the extrinsic, lumenal subunits of photosystem II (PSII). PSII is a light-driven water plastoquinone oxidoreductase, using light energy to abstract electrons from H(2)O, generating a proton gradient subsequently used for ATP formation. The extrinsic proteins stabilize the structure of photosystem II oxygen-evolving complex (OEC), the ion environment of oxygen evolution and protect the OEC against heat-induced inactivation. The protein is Photosystem II extrinsic protein U of Prochlorococcus marinus (strain MIT 9303).